A 250-amino-acid polypeptide reads, in one-letter code: DNA repair protein RecO (250 aa).

The protein belongs to the RecO family.

Functionally, involved in DNA repair and RecF pathway recombination. This Rhodopseudomonas palustris (strain TIE-1) protein is DNA repair protein RecO.